The sequence spans 295 residues: UDP-N-acetylenolpyruvoylglucosamine reductase (295 aa).

In terms of domain architecture, FAD-binding PCMH-type spans 25–189 (RVGGPADLFA…LEALFRLDQR (165 aa)). Residue arginine 169 is part of the active site. Serine 218 acts as the Proton donor in catalysis. Residue glutamate 288 is part of the active site.

This sequence belongs to the MurB family. The cofactor is FAD.

It is found in the cytoplasm. It catalyses the reaction UDP-N-acetyl-alpha-D-muramate + NADP(+) = UDP-N-acetyl-3-O-(1-carboxyvinyl)-alpha-D-glucosamine + NADPH + H(+). The protein operates within cell wall biogenesis; peptidoglycan biosynthesis. Cell wall formation. This Pelobacter propionicus (strain DSM 2379 / NBRC 103807 / OttBd1) protein is UDP-N-acetylenolpyruvoylglucosamine reductase.